A 342-amino-acid chain; its full sequence is Glycerol-1-phosphate dehydrogenase [NAD(P)+] (342 aa).

NAD(+) is bound by residues 84-88 (GRPID) and 106-109 (TSAS). A substrate-binding site is contributed by aspartate 111. Serine 115 is an NAD(+) binding site. Position 160 (aspartate 160) interacts with substrate. The Zn(2+) site is built by aspartate 160 and histidine 241. Histidine 245 contributes to the substrate binding site. Histidine 260 is a Zn(2+) binding site.

It belongs to the glycerol-1-phosphate dehydrogenase family. In terms of assembly, homodimer. Requires Zn(2+) as cofactor.

Its subcellular location is the cytoplasm. The catalysed reaction is sn-glycerol 1-phosphate + NAD(+) = dihydroxyacetone phosphate + NADH + H(+). It catalyses the reaction sn-glycerol 1-phosphate + NADP(+) = dihydroxyacetone phosphate + NADPH + H(+). Its pathway is membrane lipid metabolism; glycerophospholipid metabolism. Functionally, catalyzes the NAD(P)H-dependent reduction of dihydroxyacetonephosphate (DHAP or glycerone phosphate) to glycerol 1-phosphate (G1P). The G1P thus generated is used as the glycerophosphate backbone of phospholipids in the cellular membranes of Archaea. This Pyrobaculum islandicum (strain DSM 4184 / JCM 9189 / GEO3) protein is Glycerol-1-phosphate dehydrogenase [NAD(P)+].